Reading from the N-terminus, the 717-residue chain is Glycine--tRNA ligase beta subunit (717 aa).

It belongs to the class-II aminoacyl-tRNA synthetase family. In terms of assembly, tetramer of two alpha and two beta subunits.

It is found in the cytoplasm. It carries out the reaction tRNA(Gly) + glycine + ATP = glycyl-tRNA(Gly) + AMP + diphosphate. The protein is Glycine--tRNA ligase beta subunit of Gloeothece citriformis (strain PCC 7424) (Cyanothece sp. (strain PCC 7424)).